The sequence spans 226 residues: ATP synthase F(0) complex subunit a (226 aa).

6 consecutive transmembrane segments (helical) span residues phenylalanine 6 to phenylalanine 26, tryptophan 68 to leucine 88, glutamine 97 to phenylalanine 117, isoleucine 138 to valine 158, isoleucine 164 to isoleucine 184, and alanine 189 to isoleucine 209.

It belongs to the ATPase A chain family. Component of the ATP synthase complex composed at least of ATP5F1A/subunit alpha, ATP5F1B/subunit beta, ATP5MC1/subunit c (homooctomer), MT-ATP6/subunit a, MT-ATP8/subunit 8, ATP5ME/subunit e, ATP5MF/subunit f, ATP5MG/subunit g, ATP5MK/subunit k, ATP5MJ/subunit j, ATP5F1C/subunit gamma, ATP5F1D/subunit delta, ATP5F1E/subunit epsilon, ATP5PF/subunit F6, ATP5PB/subunit b, ATP5PD/subunit d, ATP5PO/subunit OSCP. ATP synthase complex consists of a soluble F(1) head domain (subunits alpha(3) and beta(3)) - the catalytic core - and a membrane F(0) domain - the membrane proton channel (subunits c, a, 8, e, f, g, k and j). These two domains are linked by a central stalk (subunits gamma, delta, and epsilon) rotating inside the F1 region and a stationary peripheral stalk (subunits F6, b, d, and OSCP). Interacts with DNAJC30; interaction is direct.

The protein localises to the mitochondrion inner membrane. It carries out the reaction H(+)(in) = H(+)(out). Its function is as follows. Subunit a, of the mitochondrial membrane ATP synthase complex (F(1)F(0) ATP synthase or Complex V) that produces ATP from ADP in the presence of a proton gradient across the membrane which is generated by electron transport complexes of the respiratory chain. ATP synthase complex consist of a soluble F(1) head domain - the catalytic core - and a membrane F(1) domain - the membrane proton channel. These two domains are linked by a central stalk rotating inside the F(1) region and a stationary peripheral stalk. During catalysis, ATP synthesis in the catalytic domain of F(1) is coupled via a rotary mechanism of the central stalk subunits to proton translocation. With the subunit c (ATP5MC1), forms the proton-conducting channel in the F(0) domain, that contains two crucial half-channels (inlet and outlet) that facilitate proton movement from the mitochondrial intermembrane space (IMS) into the matrix. Protons are taken up via the inlet half-channel and released through the outlet half-channel, following a Grotthuss mechanism. In Ictidomys tridecemlineatus (Thirteen-lined ground squirrel), this protein is ATP synthase F(0) complex subunit a.